A 272-amino-acid polypeptide reads, in one-letter code: MGSATVLDSIIEGVRADVAAREAAVSMDEVKEQAKRAPAPLDVMAALRASGIAVIAEVKRASPSRGALASIADPAELARAYEDGGARIISVLTEQRRFNGSLDDLDAVRAAVSIPVLRKDFIVRPYQIHEARAHGADMLLLIVAALEQPVLESLLERTESLGMTALVEVHTEEEADRALQAGASVIGVNARDLKTLEVDRDCFARIAPGLPSNVIRVAESGVRGTADLLAYAGAGADAVLVGEGLVTSGDPRSAVADLVTAGAHPSCPKPAR.

The protein belongs to the TrpC family.

It carries out the reaction 1-(2-carboxyphenylamino)-1-deoxy-D-ribulose 5-phosphate + H(+) = (1S,2R)-1-C-(indol-3-yl)glycerol 3-phosphate + CO2 + H2O. It functions in the pathway amino-acid biosynthesis; L-tryptophan biosynthesis; L-tryptophan from chorismate: step 4/5. The sequence is that of Indole-3-glycerol phosphate synthase from Mycolicibacterium vanbaalenii (strain DSM 7251 / JCM 13017 / BCRC 16820 / KCTC 9966 / NRRL B-24157 / PYR-1) (Mycobacterium vanbaalenii).